A 990-amino-acid chain; its full sequence is Insulin-degrading enzyme (990 aa).

His81 lines the Zn(2+) pocket. The active-site Proton acceptor is the Glu84. Positions 85 and 162 each coordinate Zn(2+).

Belongs to the peptidase M16 family. The cofactor is Zn(2+).

The catalysed reaction is Degradation of insulin, glucagon and other polypeptides. No action on proteins.. In terms of biological role, can cleave insulin and TGF-alpha. This chain is Insulin-degrading enzyme (Ide), found in Drosophila melanogaster (Fruit fly).